Consider the following 442-residue polypeptide: Matrix remodeling-associated protein 8 (442 aa).

Positions Met-1–Ala-19 are cleaved as a signal peptide. At Val-20–Gln-340 the chain is on the extracellular side. 2 Ig-like V-type domains span residues Pro-25–Thr-156 and Pro-159–Thr-291. 2 cysteine pairs are disulfide-bonded: Cys-53-Cys-136 and Cys-185-Cys-271. The N-linked (GlcNAc...) asparagine glycan is linked to Asn-118. The RGD 1 signature appears at Arg-128–Asp-130. Ser-227 bears the Phosphoserine mark. The short motif at Arg-251–Asp-253 is the RGD 2 element. The disordered stretch occupies residues Glu-296–Leu-319. Asn-305 carries N-linked (GlcNAc...) asparagine glycosylation. A helical transmembrane segment spans residues Leu-341–Ala-361. The Cytoplasmic portion of the chain corresponds to Thr-362–Lys-442.

As to quaternary structure, homodimer in cis. Does not appear to form trans-homodimers. Interacts with ITGB3; the interaction inhibits ITGAV:ITGB3 heterodimer formation. In terms of tissue distribution, widely expressed (at protein level). Highly expressed in brain where it localizes to the glia limitans, which is formed by the endfeet of astrocytes surrounding capillaries, and beneath the pia mater (at protein level). In lung, detected in epithelial cells of the bronchus (at protein level). Expressed in intercalated disks in the heart (at protein level). Detected in pancreatic alpha-cells in the islet of Langerhans (at protein level). In kidney, found in the brush border of the proximal convoluted tubule (at protein level). Expressed in the epithelium of the small intestine (at protein level). Weakly expressed in liver (at protein level). Detected in myeloid cells.

The protein localises to the cell membrane. Its subcellular location is the cell junction. It localises to the tight junction. It is found in the cytoplasm. The protein resides in the cell projection. The protein localises to the cilium membrane. Its subcellular location is the nucleus. Its function is as follows. Transmembrane protein which can modulate activity of various signaling pathways, probably via binding to integrin ITGAV:ITGB3. Mediates heterophilic cell-cell interactions in vitro. Inhibits osteoclastogenesis downstream of TNFSF11/RANKL and CSF1, where it may function by attenuating signaling via integrin ITGB3 and MAP kinase p38. Plays a role in cartilage formation where it promotes proliferation and maturation of growth plate chondrocytes. Stimulates formation of primary cilia in chondrocytes. Enhances expression of genes involved in the hedgehog signaling pathway in chondrocytes, including the hedgehog signaling molecule IHH; may also promote signaling via the PTHLH/PTHrP pathway. Plays a role in angiogenesis where it suppresses migration of endothelial cells and also promotes their apoptosis. Inhibits VEGF-induced activation of AKT and p38 MAP kinase in endothelial cells. Also inhibits VTN (vitronectin)-mediated integrin ITGAV:ITGB3 signaling and activation of PTK2/FAK. May play a role in the maturation and maintenance of the blood-brain barrier. The protein is Matrix remodeling-associated protein 8 of Mus musculus (Mouse).